A 338-amino-acid chain; its full sequence is Glyceraldehyde-3-phosphate dehydrogenase (338 aa).

Residues 13 to 14, aspartate 35, and arginine 80 each bind NAD(+); that span reads RI. D-glyceraldehyde 3-phosphate is bound by residues 151 to 153, threonine 182, 211 to 212, and arginine 234; these read SCT and TG. Catalysis depends on cysteine 152, which acts as the Nucleophile. Asparagine 316 serves as a coordination point for NAD(+).

The protein belongs to the glyceraldehyde-3-phosphate dehydrogenase family. As to quaternary structure, homotetramer.

The protein localises to the cytoplasm. It carries out the reaction D-glyceraldehyde 3-phosphate + phosphate + NAD(+) = (2R)-3-phospho-glyceroyl phosphate + NADH + H(+). Its pathway is carbohydrate degradation; glycolysis; pyruvate from D-glyceraldehyde 3-phosphate: step 1/5. In Colletotrichum gloeosporioides (Anthracnose fungus), this protein is Glyceraldehyde-3-phosphate dehydrogenase (GPDA).